The primary structure comprises 317 residues: Phospholipase A1 1 (317 aa).

Positions Arg-1 to Gly-7 are cleaved as a signal peptide. A propeptide spanning residues Asp-8–Arg-17 is cleaved from the precursor. A disulfide bridge links Cys-21 with Cys-104. Asn-25 is a glycosylation site (N-linked (GlcNAc...) asparagine). The active-site Nucleophile is the Ser-154. Catalysis depends on Asp-182, which acts as the Charge relay system. Cys-193 and Cys-198 are joined by a disulfide. Asn-229 is a glycosylation site (N-linked (GlcNAc...) asparagine). An intrachain disulfide couples Cys-236 to Cys-244. Catalysis depends on His-246, which acts as the Charge relay system. 3 cysteine pairs are disulfide-bonded: Cys-261–Cys-285, Cys-262–Cys-310, and Cys-278–Cys-283.

Belongs to the AB hydrolase superfamily. Lipase family. In terms of tissue distribution, expressed by the venom gland.

The protein resides in the secreted. It carries out the reaction a 1,2-diacyl-sn-glycero-3-phosphocholine + H2O = a 2-acyl-sn-glycero-3-phosphocholine + a fatty acid + H(+). Catalyzes the hydrolysis of phosphatidylcholine with phospholipase A1 activity. May act as an allergen and induce hemolytic activity. The sequence is that of Phospholipase A1 1 from Dolichovespula maculata (Bald-faced hornet).